A 494-amino-acid polypeptide reads, in one-letter code: Aspartyl/glutamyl-tRNA(Asn/Gln) amidotransferase subunit B (494 aa).

It belongs to the GatB/GatE family. GatB subfamily. As to quaternary structure, heterotrimer of A, B and C subunits.

It catalyses the reaction L-glutamyl-tRNA(Gln) + L-glutamine + ATP + H2O = L-glutaminyl-tRNA(Gln) + L-glutamate + ADP + phosphate + H(+). The catalysed reaction is L-aspartyl-tRNA(Asn) + L-glutamine + ATP + H2O = L-asparaginyl-tRNA(Asn) + L-glutamate + ADP + phosphate + 2 H(+). In terms of biological role, allows the formation of correctly charged Asn-tRNA(Asn) or Gln-tRNA(Gln) through the transamidation of misacylated Asp-tRNA(Asn) or Glu-tRNA(Gln) in organisms which lack either or both of asparaginyl-tRNA or glutaminyl-tRNA synthetases. The reaction takes place in the presence of glutamine and ATP through an activated phospho-Asp-tRNA(Asn) or phospho-Glu-tRNA(Gln). The chain is Aspartyl/glutamyl-tRNA(Asn/Gln) amidotransferase subunit B from Synechococcus sp. (strain CC9605).